Here is a 366-residue protein sequence, read N- to C-terminus: Galactoside alpha-(1,2)-fucosyltransferase 1 (366 aa).

Over 1–8 the chain is Cytoplasmic; that stretch reads MWPLSHRH. The chain crosses the membrane as a helical; Signal-anchor for type II membrane protein span at residues 9 to 25; that stretch reads LCLAFLLVCVLSAISFF. Over 26 to 366 the chain is Lumenal; it reads LHVHQDSFRH…LSPLWTLAEP (341 aa). 3 N-linked (GlcNAc...) asparagine glycosylation sites follow: N66, N302, and N328.

Belongs to the glycosyltransferase 11 family.

It is found in the golgi apparatus. The protein resides in the golgi stack membrane. The enzyme catalyses a beta-D-galactosyl-(1-&gt;4)-N-acetyl-beta-D-glucosaminyl derivative + GDP-beta-L-fucose = an alpha-L-Fuc-(1-&gt;2)-beta-D-Gal-(1-&gt;4)-beta-D-GlcNAc derivative + GDP + H(+). It carries out the reaction a ganglioside GA1 + GDP-beta-L-fucose = a ganglioside Fuc-GA1 + GDP + H(+). It catalyses the reaction a beta-D-Gal-(1-&gt;3)-beta-D-GlcNAc-(1-&gt;3)-beta-D-Gal-(1-&gt;4)-beta-D-Glc-(1&lt;-&gt;1')-Cer(d18:1(4E)) + GDP-beta-L-fucose = alpha-L-fucosyl-(1-&gt;2)- beta-D-galactosyl-(1-&gt;3)-N-acetyl-beta-D-glucosaminyl-(1-&gt;3)-beta-D-galactosyl-(1-&gt;4)-beta-D-glucosyl-(1&lt;-&gt;1')-N-acylsphing-4-enine + GDP + H(+). The catalysed reaction is a neolactoside nLc4Cer(d18:1(4E)) + GDP-beta-L-fucose = a neolactoside IV(2)-alpha-Fuc-nLc4Cer(d18:1(4E)) + GDP + H(+). The enzyme catalyses a ganglioside GM1 + GDP-beta-L-fucose = a ganglioside Fuc-GM1 + GDP + H(+). It carries out the reaction beta-D-galactosyl-(1-&gt;3)-N-acetyl-D-galactosamine + GDP-beta-L-fucose = alpha-L-fucosyl-(1-&gt;2)-beta-D-galactosyl-(1-&gt;3)-N-acetyl-D-galactosamine + GDP + H(+). The protein operates within protein modification; protein glycosylation. Functionally, catalyzes the transfer of L-fucose, from a guanosine diphosphate-beta-L-fucose, to the terminal galactose residue of glycoconjugates through an alpha(1,2) linkage leading to H antigen synthesis that is an intermediate substrate in the synthesis of ABO blood group antigens. H antigen is essential for maturation of the glomerular layer of the main olfactory bulb, in cell migration and early cell-cell contacts during tumor associated angiogenesis. Preferentially fucosylates soluble lactose and to a lesser extent fucosylates glycolipids gangliosides GA1 and GM1a. This is Galactoside alpha-(1,2)-fucosyltransferase 1 from Alouatta belzebul (Red-handed howler monkey).